The chain runs to 266 residues: Transcription factor atoh8 (266 aa).

The interval 140–164 is disordered; it reads AASQAPAGGSERAESPRKRAGEPSG. Residues 150–160 are compositionally biased toward basic and acidic residues; it reads ERAESPRKRAG. A basic motif; degenerate region spans residues 175–188; sequence TRRLLANARERTRV. One can recognise a bHLH domain in the interval 175–227; that stretch reads TRRLLANARERTRVHTISAAFEALRKQVPCYSYGQKLSKLAILRIACNYILSL. The tract at residues 189-227 is helix-loop-helix motif; that stretch reads HTISAAFEALRKQVPCYSYGQKLSKLAILRIACNYILSL.

It localises to the nucleus. It is found in the nucleus speckle. The protein resides in the cytoplasm. In terms of biological role, transcription factor that binds a palindromic (canonical) core consensus DNA sequence 5'-CANNTG- 3' known as an E-box element, possibly as a heterodimer with other bHLH proteins. During development, is required for heart looping and swim bladder formation by acting in concert with GATA4 and ZFPM1. During the development of both the retina and skeletal muscles is required for neural retinal cell through modulating PAX6 and NEUROG3 expression and myogenic differentiation. The sequence is that of Transcription factor atoh8 from Danio rerio (Zebrafish).